Consider the following 249-residue polypeptide: MPFEVVFDGAKEFADLIATASNLIDEAAFKFTEEGISMRAMDPSRVVLIDLNLPESIFSKYEVEEPETIGINMDQFKKILKRGKAKDTLILRKGDENFLEITFEGTAKRTFRLPLIDVEELELELPELPFTAKVVLLGEVLKEGIKDASLVSDAIKFIAKENEFTMKAEGETNEVEIRLTLEDEGLLDLEVEEETKSAYGIRYLSDMVKGIGKADEVILRFGNEMPLQMEYMIRDEGRLTFLLAPRVEE.

It belongs to the PCNA family. Homotrimer. The subunits circularize to form a toroid; DNA passes through its center. Replication factor C (RFC) is required to load the toroid on the DNA. Interacts with TIP.

Its activity is regulated as follows. Inhibited by interaction with the PCNA inhibitor TIP. In terms of biological role, sliding clamp subunit that acts as a moving platform for DNA processing. Responsible for tethering the catalytic subunit of DNA polymerase and other proteins to DNA during high-speed replication. This chain is DNA polymerase sliding clamp 1, found in Thermococcus kodakarensis (strain ATCC BAA-918 / JCM 12380 / KOD1) (Pyrococcus kodakaraensis (strain KOD1)).